Reading from the N-terminus, the 399-residue chain is Dual-specificity RNA methyltransferase RlmN (399 aa).

Residue glutamate 122 is the Proton acceptor of the active site. The 244-residue stretch at 128–371 (ETDRGTLCVS…VRTPRGRDIL (244 aa)) folds into the Radical SAM core domain. Cysteine 135 and cysteine 374 are joined by a disulfide. [4Fe-4S] cluster contacts are provided by cysteine 142, cysteine 146, and cysteine 149. S-adenosyl-L-methionine-binding positions include 200 to 201 (GE), serine 232, 254 to 256 (SLH), and asparagine 331. The active-site S-methylcysteine intermediate is cysteine 374.

This sequence belongs to the radical SAM superfamily. RlmN family. Requires [4Fe-4S] cluster as cofactor.

It is found in the cytoplasm. The catalysed reaction is adenosine(2503) in 23S rRNA + 2 reduced [2Fe-2S]-[ferredoxin] + 2 S-adenosyl-L-methionine = 2-methyladenosine(2503) in 23S rRNA + 5'-deoxyadenosine + L-methionine + 2 oxidized [2Fe-2S]-[ferredoxin] + S-adenosyl-L-homocysteine. The enzyme catalyses adenosine(37) in tRNA + 2 reduced [2Fe-2S]-[ferredoxin] + 2 S-adenosyl-L-methionine = 2-methyladenosine(37) in tRNA + 5'-deoxyadenosine + L-methionine + 2 oxidized [2Fe-2S]-[ferredoxin] + S-adenosyl-L-homocysteine. Functionally, specifically methylates position 2 of adenine 2503 in 23S rRNA and position 2 of adenine 37 in tRNAs. m2A2503 modification seems to play a crucial role in the proofreading step occurring at the peptidyl transferase center and thus would serve to optimize ribosomal fidelity. The polypeptide is Dual-specificity RNA methyltransferase RlmN (Rhodopseudomonas palustris (strain HaA2)).